Consider the following 93-residue polypeptide: Acylphosphatase (93 aa).

The region spanning 5–93 (AKQIVVRGRV…PNFRGFQVTG (89 aa)) is the Acylphosphatase-like domain. Catalysis depends on residues R20 and N38.

This sequence belongs to the acylphosphatase family.

The enzyme catalyses an acyl phosphate + H2O = a carboxylate + phosphate + H(+). The chain is Acylphosphatase (acyP) from Lacticaseibacillus paracasei (strain ATCC 334 / BCRC 17002 / CCUG 31169 / CIP 107868 / KCTC 3260 / NRRL B-441) (Lactobacillus paracasei).